Reading from the N-terminus, the 372-residue chain is Glutamate 5-kinase (372 aa).

Lys-14 is a binding site for ATP. Substrate contacts are provided by Ser-54, Asp-141, and Asn-153. 173-174 (TD) lines the ATP pocket. Residues 280–358 (RGTLTLDEGA…DEIEKLLGYV (79 aa)) form the PUA domain.

This sequence belongs to the glutamate 5-kinase family.

The protein resides in the cytoplasm. It carries out the reaction L-glutamate + ATP = L-glutamyl 5-phosphate + ADP. Its pathway is amino-acid biosynthesis; L-proline biosynthesis; L-glutamate 5-semialdehyde from L-glutamate: step 1/2. Catalyzes the transfer of a phosphate group to glutamate to form L-glutamate 5-phosphate. This chain is Glutamate 5-kinase, found in Stutzerimonas stutzeri (strain A1501) (Pseudomonas stutzeri).